Reading from the N-terminus, the 1213-residue chain is Oligopeptidase PhomG' (1213 aa).

His-447 lines the Zn(2+) pocket. The active site involves Glu-448. Zn(2+) is bound by residues His-451 and His-454.

The protein belongs to the peptidase M3 family. In terms of assembly, monomer. Zn(2+) serves as cofactor.

The protein operates within mycotoxin biosynthesis. Oligopeptidase; part of the gene cluster that mediates the biosynthesis of the phomopsins, a group of hexapeptide mycotoxins which infects lupins and causes lupinosis disease in livestock. Within the pathway, phomG and phomG' are probably involved in the processing of the phomA and phomA' precursors. The pathway starts with the processing of the precursor phomA by several endopeptidases including kexin proteases as well as the cluster-specific S41 family peptidase phomP1 and the oligopeptidase phomG to produce 10 identical copies of the hexapeptide Tyr-Val-Ile-Pro-Ile-Asp. After being excised from the precursor peptide, the core peptides are cyclized and modified post-translationally by enzymes encoded within the gene cluster. The timing and order of proteolysis of the phomA precursor and PTMs are still unknown. Two tyrosinase-like enzymes, phomQ1 and phomQ2, catalyze the chlorination and hydroxylation of Tyr, respectively. PhomYb, is proposed to be involved in the construction of the macrocyclic structure. The other 4 ustYa family proteins may be involved in PTMs that generate the unique structure of phomopsin A. PhomYa is required for the hydroxylation of C-beta of Tyr. PhomYc, phomYd, and phomYe are responsible for the biosynthesis of 2,3-dehydroisoleucine (dIle), 2,3-dehydroaspartic acid (dAsp), and 3,4-dehydroproline (dPro), respectively. While dIle formation by phomYc is indispensable for the installation of dAsp by phomYd, the order of the other PTMs have not been elucidated yet. Most of the biosynthetic enzymes likely have broad substrate specificity, and thus, there might be a metabolic grid from a precursor to phomopsin A. The enzyme(s) responsible for the biosynthesis of 3,4-dehydrovaline (dVal) have also not been identified yet. Finally, phomM acts as an S-adenosylmethionine-dependent alpha-N-methyltransferase that catalyzes two successive N-methylation reactions, converting N-desmethyl-phomopsin A to phomopsin A and phomopsin A further to an N,N-dimethylated congener called phomopsin E. The chain is Oligopeptidase PhomG' from Diaporthe leptostromiformis (Lupinosis disease fungus).